A 333-amino-acid polypeptide reads, in one-letter code: tRNA N6-adenosine threonylcarbamoyltransferase (333 aa).

Positions 111 and 115 each coordinate Fe cation. Residues 134–138 (LVSGG), Asp167, Gly180, and Asn272 contribute to the substrate site. Asp300 is a Fe cation binding site.

Belongs to the KAE1 / TsaD family. The cofactor is Fe(2+).

Its subcellular location is the cytoplasm. The enzyme catalyses L-threonylcarbamoyladenylate + adenosine(37) in tRNA = N(6)-L-threonylcarbamoyladenosine(37) in tRNA + AMP + H(+). Functionally, required for the formation of a threonylcarbamoyl group on adenosine at position 37 (t(6)A37) in tRNAs that read codons beginning with adenine. Is involved in the transfer of the threonylcarbamoyl moiety of threonylcarbamoyl-AMP (TC-AMP) to the N6 group of A37, together with TsaE and TsaB. TsaD likely plays a direct catalytic role in this reaction. The chain is tRNA N6-adenosine threonylcarbamoyltransferase from Hamiltonella defensa subsp. Acyrthosiphon pisum (strain 5AT).